A 416-amino-acid chain; its full sequence is uncharacterized protein (416 aa).

9 helical membrane-spanning segments follow: residues 5 to 25 (LFLI…ILSL), 84 to 104 (ISGL…LKHV), 128 to 148 (AYVP…LFSI), 160 to 180 (LAFL…YLLW), 192 to 212 (VLLF…KFGF), 237 to 257 (PIYF…PVFL), 263 to 283 (FDKR…FYSL), 288 to 308 (LHHY…FYLT), and 312 to 332 (IKYA…GVYI).

This sequence belongs to the glycosyltransferase 83 family.

The protein localises to the cell membrane. This is an uncharacterized protein from Aquifex aeolicus (strain VF5).